Reading from the N-terminus, the 323-residue chain is UDP-galactose/UDP-glucose transporter 7 (323 aa).

Residues 1-10 (MEVQAEMEPT) lie on the Cytoplasmic side of the membrane. A helical membrane pass occupies residues 11-31 (SSISLVAAVSYGIASMAMVFI). Residues 32–35 (NKAV) are Lumenal-facing. Residues 36-58 (IMQYPHSMTVLTLQQLATSLLIH) traverse the membrane as a helical segment. Topologically, residues 59–78 (FGRRMGYTRAKGIDMATAKK) are cytoplasmic. A helical membrane pass occupies residues 79–97 (LLPVSIFYNANVAFALASL). Residues 98–101 (KGVN) lie on the Lumenal side of the membrane. A helical transmembrane segment spans residues 102 to 124 (IPMYIAIKRLTPLAVLISGVLFG). The Cytoplasmic segment spans residues 125–132 (KGKPTTQV). The helical transmembrane segment at 133–153 (ALSVLLTAAGCVIAALGDFSF) threads the bilayer. Position 154 (Asp154) is a topological domain, lumenal. A helical membrane pass occupies residues 155–175 (LFGYGLALTSVFFQTMYLVLV). Topologically, residues 176–186 (EKSGAEDGLSS) are cytoplasmic. The chain crosses the membrane as a helical span at residues 187-207 (IEIMFYNSFLSLPFLSILIIV). Residues 208-226 (TGEFPNSLSLLLAKCSYLP) lie on the Lumenal side of the membrane. A helical transmembrane segment spans residues 227-247 (FLVILILSLVMGIVLNFTMFL). The Cytoplasmic portion of the chain corresponds to 248–252 (CTIVN). The helical transmembrane segment at 253-275 (SALTTTIVGVLKGVGSTTLGFVL) threads the bilayer. The Lumenal portion of the chain corresponds to 276 to 278 (LGG). Residues 279–301 (VEVHALNVSGLVVNTAGGVWYSY) traverse the membrane as a helical segment. The Cytoplasmic segment spans residues 302–323 (AKYRQKKAKPAKLMSDLEAHKK).

The protein belongs to the TPT transporter family. UGnT (TC 2.A.7.15) subfamily. As to expression, widely expressed with highest expression in roots.

The protein resides in the golgi apparatus membrane. Nucleotide-sugar transporter that transports UDP-glucose and UDP-galactose. Plays a role in lateral root and root hair development. This is UDP-galactose/UDP-glucose transporter 7 from Arabidopsis thaliana (Mouse-ear cress).